A 631-amino-acid chain; its full sequence is Pescadillo homolog (631 aa).

Positions 321-414 (RLRNLFKGLK…QLLPTNKYFL (94 aa)) constitute a BRCT domain. Disordered regions lie at residues 450 to 469 (HAQS…EDDT) and 489 to 569 (EYKK…MVKP). Serine 453 and serine 457 each carry phosphoserine. Composition is skewed to acidic residues over residues 454 to 469 (DDES…EDDT) and 499 to 524 (VNED…EELD). The stretch at 510-541 (FDGEQESDEEEEELDEKTKRLQEEKKKMSVQS) forms a coiled coil. The span at 525 to 536 (EKTKRLQEEKKK) shows a compositional bias: basic and acidic residues. The span at 543 to 552 (KVHKVNKRQL) shows a compositional bias: basic residues. Positions 553–562 (HKAEVDEHRL) are enriched in basic and acidic residues.

Belongs to the pescadillo family.

Its subcellular location is the nucleus. It localises to the nucleolus. The protein localises to the nucleoplasm. Its function is as follows. Required for maturation of ribosomal RNAs and formation of the large ribosomal subunit. The protein is Pescadillo homolog of Drosophila mojavensis (Fruit fly).